Reading from the N-terminus, the 257-residue chain is Uracil phosphoribosyltransferase homolog (257 aa).

GTP is bound by residues R81, R90, and 124-127 (EKGN). A 5-phospho-alpha-D-ribose 1-diphosphate-binding site is contributed by R134. Positions 151 and 180 each coordinate GTP. 186-194 (YPILSTGNT) serves as a coordination point for 5-phospho-alpha-D-ribose 1-diphosphate. 247-249 (THF) provides a ligand contact to uracil.

Belongs to the UPRTase family.

It localises to the cytoplasm. Its subcellular location is the nucleus. This is Uracil phosphoribosyltransferase homolog (uprt) from Danio rerio (Zebrafish).